Reading from the N-terminus, the 229-residue chain is Enolase-phosphatase E1 (229 aa).

The span at 208 to 218 shows a compositional bias: polar residues; it reads DTQSTHRQVSS. Residues 208–229 form a disordered region; sequence DTQSTHRQVSSFDDIHPEQIPT. Positions 220-229 are enriched in basic and acidic residues; that stretch reads DDIHPEQIPT.

It belongs to the HAD-like hydrolase superfamily. MasA/MtnC family. Monomer. Mg(2+) is required as a cofactor.

The enzyme catalyses 5-methylsulfanyl-2,3-dioxopentyl phosphate + H2O = 1,2-dihydroxy-5-(methylsulfanyl)pent-1-en-3-one + phosphate. It functions in the pathway amino-acid biosynthesis; L-methionine biosynthesis via salvage pathway; L-methionine from S-methyl-5-thio-alpha-D-ribose 1-phosphate: step 3/6. Its pathway is amino-acid biosynthesis; L-methionine biosynthesis via salvage pathway; L-methionine from S-methyl-5-thio-alpha-D-ribose 1-phosphate: step 4/6. Bifunctional enzyme that catalyzes the enolization of 2,3-diketo-5-methylthiopentyl-1-phosphate (DK-MTP-1-P) into the intermediate 2-hydroxy-3-keto-5-methylthiopentenyl-1-phosphate (HK-MTPenyl-1-P), which is then dephosphorylated to form the acireductone 1,2-dihydroxy-3-keto-5-methylthiopentene (DHK-MTPene). This Cronobacter sakazakii (strain ATCC BAA-894) (Enterobacter sakazakii) protein is Enolase-phosphatase E1.